A 771-amino-acid polypeptide reads, in one-letter code: Leucine-rich repeat and fibronectin type III domain-containing protein 1 (771 aa).

An N-terminal signal peptide occupies residues 1 to 31 (MAPGPFSSALLSPPPAALPFLLLLWAGASRG). An LRRNT domain is found at 32-65 (QPCPGRCICQNVAPTLTMLCAKTGLLFVPPAIDR). Over 32 to 536 (QPCPGRCICQ…LRAHFLGGTM (505 aa)) the chain is Extracellular. 7 LRR repeats span residues 66–87 (RVVE…DFAN), 90–111 (SLVH…AFAD), 114–135 (ALRA…QLRG), 138–159 (NLRH…AFDA), 163–184 (TVED…AVGQ), 187–208 (NLNT…TFVQ), and 211–232 (KLVR…GLFL). N-linked (GlcNAc...) asparagine glycosylation is present at asparagine 87. An LRRCT domain is found at 252-298 (NPLHCNCELLWLRRLTREDDLETCATPEHLTDRYFWSIPEEEFLCEP). The Ig-like domain occupies 299-386 (PLITRQAGGR…GEATAPVEVC (88 aa)). The cysteines at positions 321 and 370 are disulfide-linked. Asparagine 343 carries N-linked (GlcNAc...) asparagine glycosylation. The interval 397-422 (PAAPPPLTEPGSSDIATPGRPGANDS) is disordered. A Fibronectin type-III domain is found at 424-520 (AERRLVAAEL…GCVQFTTAGD (97 aa)). A helical membrane pass occupies residues 537-557 (IIAIGGVIVASVLVFIVLLMI). Topologically, residues 558–771 (RYKVYGDGDS…STEWMLESTV (214 aa)) are cytoplasmic. Residues serine 613 and serine 718 each carry the phosphoserine modification. Residues 654 to 743 (PSEETSGEES…HLDGAGGGAA (90 aa)) are disordered. The segment covering 719-732 (YPRRARRTKRHRST) has biased composition (basic residues). The PDZ-binding signature appears at 768–771 (ESTV).

This sequence belongs to the LRFN family. As to quaternary structure, can form heteromeric complexes with LRFN2, LRFN3, LRFN4 and LRFN5. Forms homomeric complexes, but not across cell junctions. Interacts with DLG1, DLG2, DLG3 and DLG4. Interacts with 2 AMPA receptor subunits GRIA1 and GRIA2 and NMDA receptor subunit GRIN1. In terms of processing, glycosylated.

The protein resides in the membrane. It localises to the synapse. Its subcellular location is the postsynaptic density membrane. Functionally, promotes neurite outgrowth in hippocampal neurons. Involved in the regulation and maintenance of excitatory synapses. Induces the clustering of excitatory postsynaptic proteins, including DLG4, DLGAP1, GRIA1 and GRIN1. The sequence is that of Leucine-rich repeat and fibronectin type III domain-containing protein 1 (LRFN1) from Homo sapiens (Human).